The primary structure comprises 244 residues: 3-deoxy-manno-octulosonate cytidylyltransferase (244 aa).

The protein belongs to the KdsB family.

The protein resides in the cytoplasm. The catalysed reaction is 3-deoxy-alpha-D-manno-oct-2-ulosonate + CTP = CMP-3-deoxy-beta-D-manno-octulosonate + diphosphate. Its pathway is nucleotide-sugar biosynthesis; CMP-3-deoxy-D-manno-octulosonate biosynthesis; CMP-3-deoxy-D-manno-octulosonate from 3-deoxy-D-manno-octulosonate and CTP: step 1/1. The protein operates within bacterial outer membrane biogenesis; lipopolysaccharide biosynthesis. Activates KDO (a required 8-carbon sugar) for incorporation into bacterial lipopolysaccharide in Gram-negative bacteria. In Anaeromyxobacter sp. (strain Fw109-5), this protein is 3-deoxy-manno-octulosonate cytidylyltransferase.